Consider the following 238-residue polypeptide: tRNA (guanine-N(7)-)-methyltransferase (238 aa).

The S-adenosyl-L-methionine site is built by Glu68, Glu93, Asp120, and Asp143. Asp143 is an active-site residue. Substrate-binding positions include Lys147, Asp179, and 216–219; that span reads TKFE.

It belongs to the class I-like SAM-binding methyltransferase superfamily. TrmB family.

It carries out the reaction guanosine(46) in tRNA + S-adenosyl-L-methionine = N(7)-methylguanosine(46) in tRNA + S-adenosyl-L-homocysteine. It participates in tRNA modification; N(7)-methylguanine-tRNA biosynthesis. Functionally, catalyzes the formation of N(7)-methylguanine at position 46 (m7G46) in tRNA. This chain is tRNA (guanine-N(7)-)-methyltransferase, found in Aliivibrio salmonicida (strain LFI1238) (Vibrio salmonicida (strain LFI1238)).